Here is a 100-residue protein sequence, read N- to C-terminus: Apolipoprotein C-II (100 aa).

The N-terminal stretch at 1–22 (MGTRFLLALFLVLLVLGFEVQG) is a signal peptide. Residues 66–74 (TVDEKLRDM) are lipid binding. Positions 78 to 100 (STAAVSTYAGIFTDQLLTLLKGD) are lipoprotein lipase cofactor.

The protein belongs to the apolipoprotein C2 family. Proapolipoprotein C-II is synthesized as a sialic acid containing glycoprotein which is subsequently desialylated prior to its proteolytic processing. Post-translationally, proapolipoprotein C-II, the major form found in plasma undergoes proteolytic cleavage of its N-terminal hexapeptide to generate apolipoprotein C-II, which occurs as the minor form in plasma.

Its subcellular location is the secreted. Its function is as follows. Component of chylomicrons, very low-density lipoproteins (VLDL), low-density lipoproteins (LDL), and high-density lipoproteins (HDL) in plasma. Plays an important role in lipoprotein metabolism as an activator of lipoprotein lipase. Both proapolipoprotein C-II and apolipoprotein C-II can activate lipoprotein lipase. In Otolemur garnettii (Small-eared galago), this protein is Apolipoprotein C-II (APOC2).